The primary structure comprises 632 residues: Biosynthetic arginine decarboxylase (632 aa).

K101 is subject to N6-(pyridoxal phosphate)lysine. 281–291 (FDVGGGLGVDY) lines the substrate pocket.

It belongs to the Orn/Lys/Arg decarboxylase class-II family. SpeA subfamily. It depends on Mg(2+) as a cofactor. Pyridoxal 5'-phosphate serves as cofactor.

The catalysed reaction is L-arginine + H(+) = agmatine + CO2. It functions in the pathway amine and polyamine biosynthesis; agmatine biosynthesis; agmatine from L-arginine: step 1/1. Its function is as follows. Catalyzes the biosynthesis of agmatine from arginine. The sequence is that of Biosynthetic arginine decarboxylase from Salmonella agona (strain SL483).